The following is a 129-amino-acid chain: M-zodatoxin-Lt8i (129 aa).

A signal peptide spans 1 to 20; sequence MKYFVVALALVAAFACIAES. The propeptide occupies 21 to 60; it reads KPAESEHELAEVEEENELADLEDAVWLEHLADLSDLEEAR.

This sequence belongs to the cationic peptide 06 (cytoinsectotoxin) family. In terms of tissue distribution, expressed by the venom gland.

The protein resides in the secreted. In terms of biological role, insecticidal, cytolytic and antimicrobial peptide. Forms voltage-dependent, ion-permeable channels in membranes. At high concentration causes cell membrane lysis. The protein is M-zodatoxin-Lt8i (cit 1-6) of Lachesana tarabaevi (Spider).